Here is a 583-residue protein sequence, read N- to C-terminus: Penicillin-binding protein activator LpoA (583 aa).

Residues 1 to 24 (MATILKQKLKTFFVPTAITLLLSA) form the signal peptide. C25 is lipidated: N-palmitoyl cysteine. C25 is lipidated: S-diacylglycerol cysteine.

This sequence belongs to the LpoA family. In terms of assembly, interacts with PBP1a.

It is found in the cell outer membrane. Functionally, regulator of peptidoglycan synthesis that is essential for the function of penicillin-binding protein 1A (PBP1a). The polypeptide is Penicillin-binding protein activator LpoA (Haemophilus ducreyi (strain 35000HP / ATCC 700724)).